The following is a 209-amino-acid chain: Outer-membrane lipoprotein carrier protein (209 aa).

An N-terminal signal peptide occupies residues 1 to 21 (MKLLKLLSVAALSAASMMANA).

It belongs to the LolA family. Monomer.

The protein localises to the periplasm. In terms of biological role, participates in the translocation of lipoproteins from the inner membrane to the outer membrane. Only forms a complex with a lipoprotein if the residue after the N-terminal Cys is not an aspartate (The Asp acts as a targeting signal to indicate that the lipoprotein should stay in the inner membrane). This is Outer-membrane lipoprotein carrier protein from Hahella chejuensis (strain KCTC 2396).